A 1650-amino-acid polypeptide reads, in one-letter code: HEAT repeat-containing protein 1 homolog (1650 aa).

The interval 1183 to 1210 is disordered; it reads QYDSAASPGSSVAGGRGNRGHRIRQQSL. An HEAT repeat occupies 1609–1645; sequence LLPFLNELIEDENKQVEAQCQKVINSLQHKFGETFWS.

This sequence belongs to the HEATR1/UTP10 family.

The protein localises to the nucleus. It localises to the nucleolus. In terms of biological role, involved in nucleolar processing of pre-18S ribosomal RNA. Involved in ribosome biosynthesis. This Caenorhabditis elegans protein is HEAT repeat-containing protein 1 homolog (toe-1).